The following is a 718-amino-acid chain: Heat shock 70 kDa protein 7, chloroplastic (718 aa).

A chloroplast-targeting transit peptide spans 1–92 (MASSAAQIHI…IDLGTTNSAV (92 aa)). Residues 668 to 678 (QIGQSLYNQPQ) are compositionally biased toward polar residues. Residues 668-718 (QIGQSLYNQPQPGGADSPPGGEASSSSDTSSSAKGGDNGGDVIDADFTDSN) form a disordered region.

Belongs to the heat shock protein 70 (TC 1.A.33) family. DnaK subfamily.

It is found in the plastid. Its subcellular location is the chloroplast stroma. In terms of biological role, acts redundantly with HSP70-6 in the thermotolerance of germinating seeds. Plays an important role in the protein precursor import into chloroplasts. Its function is as follows. In cooperation with other chaperones, Hsp70s are key components that facilitate folding of de novo synthesized proteins, assist translocation of precursor proteins into organelles, and are responsible for degradation of damaged protein under stress conditions. This chain is Heat shock 70 kDa protein 7, chloroplastic (HSP70-7), found in Arabidopsis thaliana (Mouse-ear cress).